A 392-amino-acid chain; its full sequence is Formate-dependent phosphoribosylglycinamide formyltransferase (392 aa).

N(1)-(5-phospho-beta-D-ribosyl)glycinamide-binding positions include 22–23 and glutamate 82; that span reads EL. Residues arginine 114, lysine 155, 160 to 165, 195 to 198, and glutamate 203 contribute to the ATP site; these read SSGKGQ and EGLV. An ATP-grasp domain is found at 119–308; it reads RLAAETLGVP…EFALHVRAFL (190 aa). The Mg(2+) site is built by glutamate 267 and glutamate 279. Residues aspartate 286, lysine 355, and 362 to 363 each bind N(1)-(5-phospho-beta-D-ribosyl)glycinamide; that span reads RR.

This sequence belongs to the PurK/PurT family. Homodimer.

The catalysed reaction is N(1)-(5-phospho-beta-D-ribosyl)glycinamide + formate + ATP = N(2)-formyl-N(1)-(5-phospho-beta-D-ribosyl)glycinamide + ADP + phosphate + H(+). It participates in purine metabolism; IMP biosynthesis via de novo pathway; N(2)-formyl-N(1)-(5-phospho-D-ribosyl)glycinamide from N(1)-(5-phospho-D-ribosyl)glycinamide (formate route): step 1/1. Involved in the de novo purine biosynthesis. Catalyzes the transfer of formate to 5-phospho-ribosyl-glycinamide (GAR), producing 5-phospho-ribosyl-N-formylglycinamide (FGAR). Formate is provided by PurU via hydrolysis of 10-formyl-tetrahydrofolate. This chain is Formate-dependent phosphoribosylglycinamide formyltransferase, found in Pectobacterium carotovorum subsp. carotovorum (strain PC1).